The following is a 952-amino-acid chain: Ubiquitin carboxyl-terminal hydrolase 15 (952 aa).

N-acetylalanine is present on alanine 2. Residues 2–223 are mediates interaction with SART3; that stretch reads AEGGAADLDI…KNEDGTWPRG (222 aa). The DUSP domain occupies 7-118; it reads ADLDIQRSDI…GQEPIARKVV (112 aa). Threonine 226 carries the phosphothreonine modification. Residues 260 to 904 form the USP domain; that stretch reads CGLSNLGNTC…AAYVLFYQRQ (645 aa). Cysteine 269 functions as the Nucleophile in the catalytic mechanism. A Phosphothreonine modification is found at threonine 573. The disordered stretch occupies residues 598–666; it reads TEGSLHCCKD…GDNDSENGLC (69 aa). The span at 627–644 shows a compositional bias: acidic residues; it reads METDEPDDESSQDQELPS. Histidine 862 acts as the Proton acceptor in catalysis. The interval 923 to 952 is disordered; that stretch reads SAATGIPLESDEDSNDNDNDIENENCMHTN. The segment covering 931-945 has biased composition (acidic residues); it reads ESDEDSNDNDNDIEN. Phosphoserine is present on residues serine 932 and serine 936.

Belongs to the peptidase C19 family. In terms of assembly, a homodimer structure has been reported; however it is unclear whether the protein form a homodimer in vivo. Identified in a complex with the COP9 signalosome complex (CSN). Interacts with SMAD1, SMAD2 and SMAD3; the interaction is direct. Forms a complex with SMURF2 and SMAD7. Interacts with TGFBR1. Interacts with SART3; the interaction is direct. May interact with RNF20 and RNF40. May interact with PRKN. Interacts with INCA1. In terms of processing, phosphorylated. Phosphorylation protects against ubiquitination and subsequent degradation by the proteasome. Ubiquitinated, leading to degradation by the proteasome.

The protein localises to the cytoplasm. It localises to the nucleus. The protein resides in the mitochondrion. It carries out the reaction Thiol-dependent hydrolysis of ester, thioester, amide, peptide and isopeptide bonds formed by the C-terminal Gly of ubiquitin (a 76-residue protein attached to proteins as an intracellular targeting signal).. In terms of biological role, hydrolase that removes conjugated ubiquitin from target proteins and regulates various pathways such as the TGF-beta receptor signaling, NF-kappa-B and RNF41/NRDP1-PRKN pathways. Acts as a key regulator of TGF-beta receptor signaling pathway, but the precise mechanism is still unclear: according to a report, acts by promoting deubiquitination of monoubiquitinated R-SMADs (SMAD1, SMAD2 and/or SMAD3), thereby alleviating inhibition of R-SMADs and promoting activation of TGF-beta target genes. According to another reports, regulates the TGF-beta receptor signaling pathway by mediating deubiquitination and stabilization of TGFBR1, leading to an enhanced TGF-beta signal. Able to mediate deubiquitination of monoubiquitinated substrates, 'Lys-27'-, 'Lys-48'- and 'Lys-63'-linked polyubiquitin chains. May also regulate gene expression and/or DNA repair through the deubiquitination of histone H2B. Acts as an inhibitor of mitophagy by counteracting the action of parkin (PRKN): hydrolyzes cleavage of 'Lys-48'- and 'Lys-63'-linked polyubiquitin chains attached by parkin on target proteins such as MFN2, thereby reducing parkin's ability to drive mitophagy. Acts as an associated component of COP9 signalosome complex (CSN) and regulates different pathways via this association: regulates NF-kappa-B by mediating deubiquitination of NFKBIA and deubiquitinates substrates bound to VCP. Involved in endosome organization by mediating deubiquitination of SQSTM1: ubiquitinated SQSTM1 forms a molecular bridge that restrains cognate vesicles in the perinuclear region and its deubiquitination releases target vesicles for fast transport into the cell periphery. Acts as a negative regulator of antifungal immunity by mediating 'Lys-27'-linked deubiquitination of CARD9, thereby inactivating CARD9. This is Ubiquitin carboxyl-terminal hydrolase 15 (USP15) from Bos taurus (Bovine).